Reading from the N-terminus, the 507-residue chain is Maturase K (507 aa).

The protein belongs to the intron maturase 2 family. MatK subfamily.

It localises to the plastid. The protein localises to the chloroplast. Functionally, usually encoded in the trnK tRNA gene intron. Probably assists in splicing its own and other chloroplast group II introns. This Lyonia ferruginea (Rusty staggerbush) protein is Maturase K.